The sequence spans 375 residues: Cytochrome P450 monooxygenase ACRTS1 (375 aa).

Residue Cys321 coordinates heme.

It belongs to the cytochrome P450 family. It depends on heme as a cofactor.

Its pathway is mycotoxin biosynthesis. Functionally, cytochrome P450 monooxygenase; part of the gene cluster that mediates the biosynthesis of the host-selective toxins (HSTs) ACR-toxins responsible for brown spot of rough lemon disease by the rough lemon pathotype. ACR-toxins cause uncoupling of mitochondrial oxidative-phosphorylation similar to that of classic protonophore. The structure of the major form of ACR-toxin (ACR-toxin I) consists of an alpha-dihydropyrone ring in a 19-carbon polyalcohol, a typical polyketide structure. Minor toxins were characterized as having a pyrone ring with polyalcohol side chains different in length and showing weaker toxicity. The highly reducing polyketide synthase ACRTS2 has all necessary enzymatic domains for multiple cycles of condensation and beta-keto processing. The cytochrome P450 monooxygenase ACRTS1 has also been shown to be essential for ACR-toxin biosynthesis, however its exact role in the pathway has not been elucidated yet. The protein is Cytochrome P450 monooxygenase ACRTS1 of Alternaria alternata (Alternaria rot fungus).